Here is a 285-residue protein sequence, read N- to C-terminus: 2,4-didehydro-3-deoxy-L-rhamnonate hydrolase (285 aa).

Leu-73 contacts pyruvate. The Mg(2+) site is built by Glu-119, Glu-121, and Asp-150. Lys-168 and Thr-238 together coordinate pyruvate.

Belongs to the FAH family. Homodimer. The cofactor is Mg(2+).

The catalysed reaction is 2,4-didehydro-3-deoxy-L-rhamnonate + H2O = (S)-lactate + pyruvate + H(+). Its pathway is carbohydrate degradation; L-rhamnose degradation. Its function is as follows. Hydrolase that catalyzes the hydrolysis of 2,4-didehydro-3-deoxy-L-rhamnonate to pyruvate and L-lactate. Can also hydrolyze L-2,4-diketo-3-deoxylyxonate and L-2,4-diketo-3-deoxymannonate. In vitro can also use acylpyruvates such as acetylpyruvate and trimethylacetopyruvate. Catalyzes the fifth (last) step in an alternative pathway for rhamnose utilization that does not involve phosphorylated intermediates. The chain is 2,4-didehydro-3-deoxy-L-rhamnonate hydrolase from Sphingomonas sp. (strain SKA58).